The primary structure comprises 125 residues: Small ribosomal subunit protein uS12m (125 aa).

Belongs to the universal ribosomal protein uS12 family.

It is found in the mitochondrion. Functionally, protein S12 is involved in the translation initiation step. The chain is Small ribosomal subunit protein uS12m (RPS12) from Allium cepa (Onion).